The chain runs to 294 residues: Deubiquitinase OTUD6B (294 aa).

The segment at 85–120 (VTSLDLGSEEPVQQPRVSKAQKRREKKAAQEKERDD) is disordered. The segment covering 111–120 (KAAQEKERDD) has biased composition (basic and acidic residues). Positions 150–287 (LQIRQIPSDG…GEHYNSVEQL (138 aa)) constitute an OTU domain. The tract at residues 155 to 161 (IPSDGHC) is cys-loop. The active site involves Asp-158. Cys-161 functions as the Nucleophile in the catalytic mechanism. The interval 222-232 (IVNTPAWGGQL) is variable-loop. The his-loop stretch occupies residues 270 to 280 (YMRHAYGLGEH). The active site involves His-280.

The enzyme catalyses Thiol-dependent hydrolysis of ester, thioester, amide, peptide and isopeptide bonds formed by the C-terminal Gly of ubiquitin (a 76-residue protein attached to proteins as an intracellular targeting signal).. In terms of biological role, deubiquitinating enzyme that may play a role in the ubiquitin-dependent regulation of different cellular processes. The chain is Deubiquitinase OTUD6B (otud6b) from Xenopus laevis (African clawed frog).